The primary structure comprises 76 residues: Centromere protein W (76 aa).

It belongs to the CENP-W/WIP1 family. As to quaternary structure, heterodimer with CENPT; this dimer coassembles with CENPS-CENPX heterodimers at centromeres to form the tetrameric CENP-T-W-S-X complex, which is a subcomplex of the large constitutive centromere-associated network (CCAN, also known as the interphase centromere complex or ICEN). Interacts with NPM1.

It localises to the nucleus. It is found in the chromosome. Its subcellular location is the centromere. The protein localises to the kinetochore. In terms of biological role, component of the CENPA-NAC (nucleosome-associated) complex, a complex that plays a central role in assembly of kinetochore proteins, mitotic progression and chromosome segregation. The CENPA-NAC complex recruits the CENPA-CAD (nucleosome distal) complex and may be involved in incorporation of newly synthesized CENPA into centromeres. Part of a nucleosome-associated complex that binds specifically to histone H3-containing nucleosomes at the centromere, as opposed to nucleosomes containing CENPA. Component of the heterotetrameric CENP-T-W-S-X complex that binds and supercoils DNA, and plays an important role in kinetochore assembly. CENPW has a fundamental role in kinetochore assembly and function. It is one of the inner kinetochore proteins, with most further proteins binding downstream. Required for normal chromosome organization and normal progress through mitosis. The polypeptide is Centromere protein W (CENPW) (Gallus gallus (Chicken)).